Consider the following 943-residue polypeptide: Isoleucine--tRNA ligase (943 aa).

The 'HIGH' region signature appears at 58-68 (PYANGNIHIGH). Glu567 contacts L-isoleucyl-5'-AMP. The 'KMSKS' region motif lies at 608–612 (KMSKS). Lys611 is a binding site for ATP. Zn(2+) contacts are provided by Cys906, Cys909, Cys926, and Cys929.

This sequence belongs to the class-I aminoacyl-tRNA synthetase family. IleS type 1 subfamily. In terms of assembly, monomer. It depends on Zn(2+) as a cofactor.

It is found in the cytoplasm. It catalyses the reaction tRNA(Ile) + L-isoleucine + ATP = L-isoleucyl-tRNA(Ile) + AMP + diphosphate. Its function is as follows. Catalyzes the attachment of isoleucine to tRNA(Ile). As IleRS can inadvertently accommodate and process structurally similar amino acids such as valine, to avoid such errors it has two additional distinct tRNA(Ile)-dependent editing activities. One activity is designated as 'pretransfer' editing and involves the hydrolysis of activated Val-AMP. The other activity is designated 'posttransfer' editing and involves deacylation of mischarged Val-tRNA(Ile). The polypeptide is Isoleucine--tRNA ligase (Pseudomonas savastanoi pv. phaseolicola (strain 1448A / Race 6) (Pseudomonas syringae pv. phaseolicola (strain 1448A / Race 6))).